A 238-amino-acid polypeptide reads, in one-letter code: Ion-translocating oxidoreductase complex subunit E (238 aa).

5 helical membrane passes run Leu-41–Val-61, Leu-71–Ala-91, Glu-95–Gly-115, Ser-130–Leu-150, and Gly-184–Leu-204.

Belongs to the NqrDE/RnfAE family. The complex is composed of six subunits: RnfA, RnfB, RnfC, RnfD, RnfE and RnfG.

The protein resides in the cell inner membrane. Its function is as follows. Part of a membrane-bound complex that couples electron transfer with translocation of ions across the membrane. This Pseudomonas aeruginosa (strain LESB58) protein is Ion-translocating oxidoreductase complex subunit E.